The sequence spans 428 residues: Type II methyltransferase M.BanI (428 aa).

Residues 3 to 417 (IKFVDLFAGI…EDLFQNNVNE (415 aa)) form the SAM-dependent MTase C5-type domain. C76 is an active-site residue.

The protein belongs to the class I-like SAM-binding methyltransferase superfamily. C5-methyltransferase family. As to quaternary structure, monomer.

It carries out the reaction a 2'-deoxycytidine in DNA + S-adenosyl-L-methionine = a 5-methyl-2'-deoxycytidine in DNA + S-adenosyl-L-homocysteine + H(+). Its function is as follows. A methylase, recognizes the double-stranded sequence 5'-GGYRCC-3', methylates C-4 on both strands, and protects the DNA from cleavage by the BanI endonuclease. This chain is Type II methyltransferase M.BanI (banIM), found in Aneurinibacillus aneurinilyticus (Bacillus aneurinolyticus).